We begin with the raw amino-acid sequence, 299 residues long: ATP synthase gamma chain (299 aa).

It belongs to the ATPase gamma chain family. As to quaternary structure, F-type ATPases have 2 components, CF(1) - the catalytic core - and CF(0) - the membrane proton channel. CF(1) has five subunits: alpha(3), beta(3), gamma(1), delta(1), epsilon(1). CF(0) has three main subunits: a, b and c.

Its subcellular location is the cell membrane. Its function is as follows. Produces ATP from ADP in the presence of a proton gradient across the membrane. The gamma chain is believed to be important in regulating ATPase activity and the flow of protons through the CF(0) complex. The sequence is that of ATP synthase gamma chain from Clavibacter michiganensis subsp. michiganensis (strain NCPPB 382).